A 154-amino-acid chain; its full sequence is Nitrogen regulatory protein (154 aa).

One can recognise a PTS EIIA type-2 domain in the interval Gln-6–Val-150. His-68 acts as the Tele-phosphohistidine intermediate in catalysis.

Its subcellular location is the cytoplasm. Functionally, seems to have a role in regulating nitrogen assimilation. The protein is Nitrogen regulatory protein (ptsN) of Pseudomonas aeruginosa (strain ATCC 15692 / DSM 22644 / CIP 104116 / JCM 14847 / LMG 12228 / 1C / PRS 101 / PAO1).